We begin with the raw amino-acid sequence, 542 residues long: CTP synthase (542 aa).

The segment at 1-265 is amidoligase domain; the sequence is MARYVFITGG…DSEVLSAFGM (265 aa). Residue serine 13 participates in CTP binding. Serine 13 lines the UTP pocket. 14-19 is an ATP binding site; it reads SLGKGI. Tyrosine 54 is a binding site for L-glutamine. Aspartate 71 provides a ligand contact to ATP. Residues aspartate 71 and glutamate 139 each coordinate Mg(2+). CTP is bound by residues 146-148, 186-191, and lysine 222; these read DIE and KTKPTQ. UTP is bound by residues 186–191 and lysine 222; that span reads KTKPTQ. A Glutamine amidotransferase type-1 domain is found at 291-541; sequence TIAVVGKYTG…IEATVEQSRL (251 aa). Alanine 353 provides a ligand contact to L-glutamine. Cysteine 380 (nucleophile; for glutamine hydrolysis) is an active-site residue. Residues 381 to 384, glutamate 404, and arginine 469 each bind L-glutamine; that span reads FGMQ. Catalysis depends on residues histidine 514 and glutamate 516.

Belongs to the CTP synthase family. As to quaternary structure, homotetramer.

The enzyme catalyses UTP + L-glutamine + ATP + H2O = CTP + L-glutamate + ADP + phosphate + 2 H(+). The catalysed reaction is L-glutamine + H2O = L-glutamate + NH4(+). It catalyses the reaction UTP + NH4(+) + ATP = CTP + ADP + phosphate + 2 H(+). Its pathway is pyrimidine metabolism; CTP biosynthesis via de novo pathway; CTP from UDP: step 2/2. Allosterically activated by GTP, when glutamine is the substrate; GTP has no effect on the reaction when ammonia is the substrate. The allosteric effector GTP functions by stabilizing the protein conformation that binds the tetrahedral intermediate(s) formed during glutamine hydrolysis. Inhibited by the product CTP, via allosteric rather than competitive inhibition. Its function is as follows. Catalyzes the ATP-dependent amination of UTP to CTP with either L-glutamine or ammonia as the source of nitrogen. Regulates intracellular CTP levels through interactions with the four ribonucleotide triphosphates. This is CTP synthase from Bartonella henselae (strain ATCC 49882 / DSM 28221 / CCUG 30454 / Houston 1) (Rochalimaea henselae).